The following is a 586-amino-acid chain: MLACVTMKMLRHAKCFQRLAIFGSVRALHKDNRTATPQNFSNYESMKQDFKLGIPEYFNFAKDVLDQWTDKEKAGKKPSNPAFWWINRNGEEVRWSFEELGSLSRKFANILSEACSLQRGDRVILILPRVPEWWLANVACLRTGTVLIPGTTQLTQKDILYRLQSSKANCIITNDVLAPAVDAVAPKCENLHSKLIVSENSREGWGNLKEMMKHASDSHTCVKTKHNEIMAIFFTSGTSGYPKMTAHTHSSFGLGLSVNGRFWLDLTPSDVMWNTSDTGWAKSAWSSVFSPWIQGACVFTHHLPRFEPTSILQTLSKYPITVFCSAPTVYRMLVQNDMASYKFKSLKHCVSAGEPITPDVTEKWRNKTGLDIYEGYGQTETVLICGNFKGMKIKPGSMGKPSPAFDVKIVDVNGNVLPPGQEGDIGIQVLPNRPFGLFTHYVDNPSKTASTLRGNFYITGDRGYMDEDGYFWFVARADDVILSSGYRIGPFEVENALNEHPSVAESAVVSSPDPIRGEVVKAFVVLNPDYKSHDQEQLIKEIQEHVKKTTAPYKYPRKVEFIQELPKTISGKTKRNELRKKEWKTI.

The transit peptide at Met-1–Ala-27 directs the protein to the mitochondrion. 2 positions are modified to N6-succinyllysine: Lys-73 and Lys-106. Lys-157 carries the post-translational modification N6-acetyllysine. Residues Thr-235–Lys-243, Glu-374–Thr-379, Asp-461, Arg-476, and Lys-572 contribute to the ATP site.

The protein belongs to the ATP-dependent AMP-binding enzyme family. Mg(2+) serves as cofactor. Requires Mn(2+) as cofactor.

Its subcellular location is the mitochondrion. It is found in the mitochondrion matrix. The catalysed reaction is a medium-chain fatty acid + ATP + CoA = a medium-chain fatty acyl-CoA + AMP + diphosphate. It catalyses the reaction propanoate + ATP + CoA = propanoyl-CoA + AMP + diphosphate. The enzyme catalyses butanoate + ATP + CoA = butanoyl-CoA + AMP + diphosphate. It carries out the reaction 2-methylpropanoate + ATP + CoA = 2-methylpropanoyl-CoA + AMP + diphosphate. The catalysed reaction is 2-methylbutanoate + ATP + CoA = 2-methylbutanoyl-CoA + AMP + diphosphate. It catalyses the reaction octanoate + ATP + CoA = octanoyl-CoA + AMP + diphosphate. Its function is as follows. Catalyzes the activation of fatty acids by CoA to produce an acyl-CoA, the first step in fatty acid metabolism. Capable of activating medium-chain fatty acids with a preference for isobutyrate among fatty acids with 2-6 carbon atoms. The sequence is that of Acyl-coenzyme A synthetase ACSM3, mitochondrial (ACSM3) from Pongo abelii (Sumatran orangutan).